Reading from the N-terminus, the 315-residue chain is 4-hydroxy-3-methylbut-2-enyl diphosphate reductase (315 aa).

Residue Cys18 coordinates [4Fe-4S] cluster. His47 and His80 together coordinate (2E)-4-hydroxy-3-methylbut-2-enyl diphosphate. His47 and His80 together coordinate dimethylallyl diphosphate. Positions 47 and 80 each coordinate isopentenyl diphosphate. Cys102 is a [4Fe-4S] cluster binding site. His130 contributes to the (2E)-4-hydroxy-3-methylbut-2-enyl diphosphate binding site. Dimethylallyl diphosphate is bound at residue His130. His130 provides a ligand contact to isopentenyl diphosphate. The active-site Proton donor is Glu132. Thr171 is a (2E)-4-hydroxy-3-methylbut-2-enyl diphosphate binding site. Cys201 contacts [4Fe-4S] cluster. (2E)-4-hydroxy-3-methylbut-2-enyl diphosphate contacts are provided by Ser229, Ser230, Asn231, and Ser274. Dimethylallyl diphosphate contacts are provided by Ser229, Ser230, Asn231, and Ser274. Isopentenyl diphosphate-binding residues include Ser229, Ser230, Asn231, and Ser274.

The protein belongs to the IspH family. [4Fe-4S] cluster serves as cofactor.

The catalysed reaction is isopentenyl diphosphate + 2 oxidized [2Fe-2S]-[ferredoxin] + H2O = (2E)-4-hydroxy-3-methylbut-2-enyl diphosphate + 2 reduced [2Fe-2S]-[ferredoxin] + 2 H(+). The enzyme catalyses dimethylallyl diphosphate + 2 oxidized [2Fe-2S]-[ferredoxin] + H2O = (2E)-4-hydroxy-3-methylbut-2-enyl diphosphate + 2 reduced [2Fe-2S]-[ferredoxin] + 2 H(+). The protein operates within isoprenoid biosynthesis; dimethylallyl diphosphate biosynthesis; dimethylallyl diphosphate from (2E)-4-hydroxy-3-methylbutenyl diphosphate: step 1/1. Its pathway is isoprenoid biosynthesis; isopentenyl diphosphate biosynthesis via DXP pathway; isopentenyl diphosphate from 1-deoxy-D-xylulose 5-phosphate: step 6/6. Functionally, catalyzes the conversion of 1-hydroxy-2-methyl-2-(E)-butenyl 4-diphosphate (HMBPP) into a mixture of isopentenyl diphosphate (IPP) and dimethylallyl diphosphate (DMAPP). Acts in the terminal step of the DOXP/MEP pathway for isoprenoid precursor biosynthesis. This is 4-hydroxy-3-methylbut-2-enyl diphosphate reductase from Hyphomonas neptunium (strain ATCC 15444).